The primary structure comprises 169 residues: Large ribosomal subunit protein uL10 (169 aa).

The protein belongs to the universal ribosomal protein uL10 family. Part of the ribosomal stalk of the 50S ribosomal subunit. The N-terminus interacts with L11 and the large rRNA to form the base of the stalk. The C-terminus forms an elongated spine to which L12 dimers bind in a sequential fashion forming a multimeric L10(L12)X complex.

In terms of biological role, forms part of the ribosomal stalk, playing a central role in the interaction of the ribosome with GTP-bound translation factors. In Rickettsia rickettsii (strain Iowa), this protein is Large ribosomal subunit protein uL10.